Reading from the N-terminus, the 260-residue chain is MMDLFPDALASACLQQFRATPPLVHCLTNEVVQSFTANVLLALGAFPAMVVEPQEAAQFSTMANSLLINIGTLHRARAESMLSAITAANQAGTPWVLDPVAVGGLAYRTDFARHLLTLKPAAIRGNASEIMALSGMATMGRGVDSVDTSLAALPAARQLAQRTQTVVAVTGEVDYITDGQRDVAVTGGDKLMTRVVGTGCALSAVVAAFCALEGDRLHHVATACRIMSQVGGQVSQHVAGPGSFVPAFLDGLYQLETLTY.

Methionine 49 is a substrate binding site. ATP-binding residues include arginine 124 and threonine 170. Glycine 197 provides a ligand contact to substrate.

It belongs to the Thz kinase family. Mg(2+) is required as a cofactor.

The enzyme catalyses 5-(2-hydroxyethyl)-4-methylthiazole + ATP = 4-methyl-5-(2-phosphooxyethyl)-thiazole + ADP + H(+). It functions in the pathway cofactor biosynthesis; thiamine diphosphate biosynthesis; 4-methyl-5-(2-phosphoethyl)-thiazole from 5-(2-hydroxyethyl)-4-methylthiazole: step 1/1. Its function is as follows. Catalyzes the phosphorylation of the hydroxyl group of 4-methyl-5-beta-hydroxyethylthiazole (THZ). The polypeptide is Hydroxyethylthiazole kinase (Yersinia enterocolitica serotype O:8 / biotype 1B (strain NCTC 13174 / 8081)).